The following is a 310-amino-acid chain: Tagatose-6-phosphate kinase (310 aa).

The protein belongs to the carbohydrate kinase PfkB family. LacC subfamily.

It catalyses the reaction D-tagatofuranose 6-phosphate + ATP = D-tagatofuranose 1,6-bisphosphate + ADP + H(+). It participates in carbohydrate metabolism; D-tagatose 6-phosphate degradation; D-glyceraldehyde 3-phosphate and glycerone phosphate from D-tagatose 6-phosphate: step 1/2. The polypeptide is Tagatose-6-phosphate kinase (Staphylococcus aureus (strain bovine RF122 / ET3-1)).